The primary structure comprises 243 residues: Probable aquaporin SIP1-2 (243 aa).

2 helical membrane-spanning segments follow: residues 12-32 (VITF…AAIV) and 42-62 (WAPL…FTVI). The short motif at 72 to 74 (NPC) is the NPA 1 element. Transmembrane regions (helical) follow at residues 90–110 (FSLA…AITI), 135–155 (GAIS…LIIL), and 162–182 (LAKT…GSKF). The NPA 2 signature appears at 188–190 (NPA). Residues 210 to 230 (VYWISSYTGAILSAMLFRIIF) traverse the membrane as a helical segment.

This sequence belongs to the MIP/aquaporin (TC 1.A.8) family. SIP (TC 1.A.8.10) subfamily. As to expression, expressed in roots and above ground. Expressed in elongating regions of the root tips, cotyledons, minor veins and hydathode cells of the rosette leaves. Weakly expressed in vascular tissues of the flower petals, filaments of stamens, upper part of the styles and receptacles of the siliques.

The protein localises to the endoplasmic reticulum membrane. Water channel required to facilitate the transport of water across cell membrane. This is Probable aquaporin SIP1-2 (SIP1-2) from Arabidopsis thaliana (Mouse-ear cress).